Consider the following 936-residue polypeptide: F-box protein dre-1 (936 aa).

The segment at 1 to 67 (MSSSSSPFFH…GSSEADNPTL (67 aa)) is disordered. Over residues 22–36 (QQSPSYSQNSNSPSQ) the composition is skewed to low complexity. Residues 48 to 63 (GSTSMRYSPSGSSEAD) are compositionally biased toward polar residues. The F-box domain occupies 159 to 205 (QDHINRLPEELLLKVFSFLPDKSLLACSSVSYRFNQISNSHEVWKEL). PbH1 repeat units follow at residues 405 to 427 (SAAPKFKYCTVLDCENVGIYITD), 428 to 450 (NATGHYEHCEIARNTLAGVWVKN), 451 to 473 (HANPYFRKCTIHSGKDVGVFTFE), 474 to 496 (HGQGYFEKCNIHSNRISGIEVKN), 497 to 519 (SANPVVIRCEVHHGYTGGIYVHE), 520 to 542 (RGRGQFMENRIYANAYAGIWITS), 543 to 565 (HSDPTIRKNEIFTGQQGGVYIFG), 566 to 588 (EGRGLIEQNNIYGNALAGIQIRS), 589 to 611 (QSDPIVRLNKIHDGLHGGIYVHE), 612 to 634 (KGRGLIEENEVYGNTLAGIWVTT), 635 to 657 (GSSPILRKNRIHSGKQVGVYFYD), 658 to 680 (QGHGLLEENDIFNHLYSGVQIRT), 681 to 703 (GSNPKITRNKIWGGQNGGVLVYN), 704 to 726 (GGKGCLEDNEIFDNAMAGVWIKT), 727 to 749 (DSEPTLRRNKIYDGRDGGVCIFN), 750 to 772 (RGKGLLEDNEIFRNAQAGVLIST), 773 to 795 (ESNPTLRRNRVFDGKSAGIEITN), and 796 to 818 (GATATLEENQLFRNKYGGLCVAT). The UBR-type zinc finger occupies 843 to 914 (GLCLFKVSSN…LERHCHLQNV (72 aa)).

In terms of assembly, component of a SCF ubiquitin ligase complex. Interacts (via F-box) with skr-1. Interacts with blmp-1; the interaction targets blmp-1 for proteasomal degradation. Interacts with ced-9; the interaction inhibits ced-9 activity, either directly or indirectly. As to expression, in mid-embryogenesis, expression is most prominent in epidermal and intestinal cells. By the 1.5-fold stage of embryogenesis, expression is additionally detected in neurons and other cells. During larval and adult stages, highest expression is seen in epidermal seam cells and hypodermis. In larvae, strongly expressed in the P epidermal blast cells and descendents that give rise to the vulva and weakly expressed in the somatic gonad, including the gonadoblasts, the anchor cell and the distal tip cells. Some weak expression also seen in adult spermatheca and uterus. In the musculature, expressed in the pharynx, anal depressor, sex muscles, and body wall muscles. Detected in neurons of the head, tail, ventral cord and periphery. Also expressed in the embryonic tail spike cell.

Its subcellular location is the nucleus. It is found in the cytoplasm. The protein operates within protein modification; protein ubiquitination. Substrate recognition component of a SCF (SKP1-CUL1-F-box protein) E3 ubiquitin-protein ligase complex which mediates the ubiquitination and subsequent proteasomal degradation of target proteins including blmp-1. Promotes ubiquitination of snail family proteins ces-1, scrt-1 and snai-1. Heterochronic protein which is required for the timing of gonad development and epidermal seam cell differentiation. Regulates tail-spike cell death through inhibition of the apoptosis regulator ced-9. The sequence is that of F-box protein dre-1 from Caenorhabditis elegans.